Reading from the N-terminus, the 306-residue chain is Protein YIPF1 (306 aa).

At 1-119 the chain is on the cytoplasmic side; sequence MAAVDDLQFE…VRLYIRSNPD (119 aa). The segment at 14 to 62 is disordered; the sequence is NAATSLTANPDATTVNIEDPGETPKHQSGSPRGSGREEDDELLGNDDSD. Polar residues predominate over residues 15 to 29; it reads AATSLTANPDATTVN. A compositionally biased stretch (acidic residues) spans 50–59; that stretch reads EEDDELLGND. Residues 120–140 form a helical membrane-spanning segment; it reads LYGPFWICATLVFAIAISGNL. Residues 141–162 lie on the Lumenal side of the membrane; it reads SNFLIHLGEKTYRYVPEFRKVS. The helical transmembrane segment at 163–183 threads the bilayer; it reads IAATTIYAYAWLVPLALWGFL. Topologically, residues 184-200 are cytoplasmic; that stretch reads MWRNSKVMNIVSYSFLE. A helical transmembrane segment spans residues 201–221; the sequence is IVCVYGYSLFIYIPTAILWII. Residues 222 to 227 are Lumenal-facing; the sequence is PQKAVR. Residues 228–248 form a helical membrane-spanning segment; it reads WILVMIALGISGSVLAMTFWP. Residues 249–256 are Cytoplasmic-facing; the sequence is AVREDNRR. The helical transmembrane segment at 257 to 277 threads the bilayer; that stretch reads VALATIVTIVLLHMLLSVGCL. The Lumenal portion of the chain corresponds to 278-306; that stretch reads AYFFDAPEMDHLPTTTATPNQTVAAAKSS. N-linked (GlcNAc...) asparagine glycosylation is present at Asn-297.

This sequence belongs to the YIP1 family. Interacts with YIPF6; this interaction may stabilize YIPF1. May also form a ternary complex with YIPF2 and YIPF6.

The protein localises to the golgi apparatus. It localises to the cis-Golgi network membrane. Its subcellular location is the trans-Golgi network membrane. The protein resides in the late endosome membrane. The sequence is that of Protein YIPF1 (YIPF1) from Pongo abelii (Sumatran orangutan).